The chain runs to 409 residues: Lysosome-associated membrane glycoprotein 1 (409 aa).

An N-terminal signal peptide occupies residues methionine 1 to serine 25. Residues alanine 26–cysteine 187 are first lumenal domain. The Lumenal portion of the chain corresponds to alanine 26–methionine 374. N-linked (GlcNAc...) asparagine glycans are attached at residues asparagine 34, asparagine 59, asparagine 72, asparagine 80, asparagine 103, asparagine 117, asparagine 126, asparagine 146, asparagine 161, and asparagine 179. Cysteine 38 and cysteine 76 are disulfide-bonded. Residues cysteine 151 and cysteine 187 are joined by a disulfide bond. A disordered region spans residues phenylalanine 180 to alanine 207. Residues glutamate 188–serine 219 are hinge. A compositionally biased stretch (pro residues) spans proline 194 to alanine 207. N-linked (GlcNAc...) asparagine glycans are attached at residues asparagine 215, asparagine 220, asparagine 241, asparagine 253, asparagine 260, asparagine 285, asparagine 299, and asparagine 314. The interval asparagine 220–methionine 374 is second lumenal domain. Cysteines 223 and 261 form a disulfide. Residues cysteine 330 and cysteine 367 are joined by a disulfide bond. The chain crosses the membrane as a helical span at residues leucine 375–glycine 398. Topologically, residues arginine 399 to isoleucine 409 are cytoplasmic.

Belongs to the LAMP family. Interacts with ABCB9; this interaction strongly stabilizes ABCB9 and protects ABCB9 against lysosomal degradation. Interacts with FURIN. Interacts with TMEM175; inhibiting the proton channel activity of TMEM175. In terms of processing, O- and N-glycosylated; some of the N-glycans attached to LAMP-1 are polylactosaminoglycans.

It is found in the lysosome membrane. Its subcellular location is the endosome membrane. It localises to the late endosome membrane. The protein localises to the cell membrane. The protein resides in the cytolytic granule membrane. Its function is as follows. Lysosomal membrane glycoprotein which plays an important role in lysosome biogenesis, lysosomal pH regulation, autophagy and cholesterol homeostasis. Acts as an important regulator of lysosomal lumen pH regulation by acting as a direct inhibitor of the proton channel TMEM175, facilitating lysosomal acidification for optimal hydrolase activity. Also plays an important role in NK-cells cytotoxicity. Mechanistically, participates in cytotoxic granule movement to the cell surface and perforin trafficking to the lytic granule. In addition, protects NK-cells from degranulation-associated damage induced by their own cytotoxic granule content. Presents carbohydrate ligands to selectins. This chain is Lysosome-associated membrane glycoprotein 1 (LAMP1), found in Bos taurus (Bovine).